Here is a 266-residue protein sequence, read N- to C-terminus: Non-structural maintenance of chromosomes element 1 homolog (266 aa).

An interaction with NSMCE3 region spans residues 1–102 (MQGSTRRMSV…SISKMATDFA (102 aa)). The segment at 191–232 (CNICHSLLIQGQSCETCGIRMHLPCVAKYFQSNAEPRCPHCN) adopts an RING-type; atypical zinc-finger fold. Positions 245–266 (PEKERESGVSKSNKKSLRSRQH) are disordered. Serine 251 carries the post-translational modification Phosphoserine. Residues 256 to 266 (SNKKSLRSRQH) show a composition bias toward basic residues.

This sequence belongs to the NSE1 family. Component of the SMC5-SMC6 complex which consists at least of SMC5, SMC6, NSMCE2, NSMCE1, NSMCE4A or EID3 and NSMCE3. NSMCE1, NSMCE4A or EID3 and NSMCE3 probably form a subcomplex that bridges the head domains of the SMC5-SMC6 heterodimer. Interacts with NSMCE3. Ubiquitinated.

It is found in the nucleus. It localises to the chromosome. Its subcellular location is the telomere. It catalyses the reaction S-ubiquitinyl-[E2 ubiquitin-conjugating enzyme]-L-cysteine + [acceptor protein]-L-lysine = [E2 ubiquitin-conjugating enzyme]-L-cysteine + N(6)-ubiquitinyl-[acceptor protein]-L-lysine.. Its function is as follows. RING-type zinc finger-containing E3 ubiquitin ligase that assembles with melanoma antigen protein (MAGE) to catalyze the direct transfer of ubiquitin from E2 ubiquitin-conjugating enzyme to a specific substrate. Within MAGE-RING ubiquitin ligase complex, MAGE stimulates and specifies ubiquitin ligase activity likely through recruitment and/or stabilization of the E2 ubiquitin-conjugating enzyme at the E3:substrate complex. Involved in maintenance of genome integrity, DNA damage response and DNA repair. NSMCE3/MAGEG1 and NSMCE1 ubiquitin ligase are components of SMC5-SMC6 complex and may positively regulate homologous recombination-mediated DNA repair. The polypeptide is Non-structural maintenance of chromosomes element 1 homolog (NSMCE1) (Pongo abelii (Sumatran orangutan)).